The sequence spans 331 residues: Probable leucine carboxyl methyltransferase 1 (331 aa).

Residues Arg82, Gly107, Asp131, 179 to 180 (DL), and Glu206 each bind S-adenosyl-L-methionine.

This sequence belongs to the methyltransferase superfamily. LCMT family.

The enzyme catalyses [phosphatase 2A protein]-C-terminal L-leucine + S-adenosyl-L-methionine = [phosphatase 2A protein]-C-terminal L-leucine methyl ester + S-adenosyl-L-homocysteine. Methylates the carboxyl group of the C-terminal leucine residue of protein phosphatase 2A catalytic subunits to form alpha-leucine ester residues. The protein is Probable leucine carboxyl methyltransferase 1 of Caenorhabditis briggsae.